Here is a 29-residue protein sequence, read N- to C-terminus: Toxin Bl-4 (29 aa).

The protein belongs to the long (4 C-C) scorpion toxin superfamily. Sodium channel inhibitor family. Beta subfamily. As to expression, expressed by the venom gland.

The protein resides in the secreted. Its function is as follows. Excitatory insect beta-toxins induce a spastic paralysis. They bind voltage-independently at site-4 of sodium channels (Nav) and shift the voltage of activation toward more negative potentials thereby affecting sodium channel activation and promoting spontaneous and repetitive firing. The fraction to which this protein belongs exhibits low toxicity and induces transient paralysis in all insects tested (the crickets A.domesticus). The polypeptide is Toxin Bl-4 (Buthacus leptochelys (Egyptian fat-tailed scorpion)).